We begin with the raw amino-acid sequence, 185 residues long: Peptidyl-tRNA hydrolase (185 aa).

Tyr-14 is a tRNA binding site. Catalysis depends on His-19, which acts as the Proton acceptor. Residues Phe-64, Asn-66, and Asn-112 each coordinate tRNA.

This sequence belongs to the PTH family. Monomer.

The protein resides in the cytoplasm. It catalyses the reaction an N-acyl-L-alpha-aminoacyl-tRNA + H2O = an N-acyl-L-amino acid + a tRNA + H(+). Its function is as follows. Hydrolyzes ribosome-free peptidyl-tRNAs (with 1 or more amino acids incorporated), which drop off the ribosome during protein synthesis, or as a result of ribosome stalling. Functionally, catalyzes the release of premature peptidyl moieties from peptidyl-tRNA molecules trapped in stalled 50S ribosomal subunits, and thus maintains levels of free tRNAs and 50S ribosomes. The chain is Peptidyl-tRNA hydrolase from Latilactobacillus sakei subsp. sakei (strain 23K) (Lactobacillus sakei subsp. sakei).